Here is a 171-residue protein sequence, read N- to C-terminus: Shikimate kinase (171 aa).

Residue 14 to 19 participates in ATP binding; that stretch reads GAGKST. Ser18 is a Mg(2+) binding site. Asp36, Arg60, and Gly82 together coordinate substrate. Arg120 is an ATP binding site. Substrate is bound at residue Arg139. Gln156 is an ATP binding site.

The protein belongs to the shikimate kinase family. Monomer. It depends on Mg(2+) as a cofactor.

It is found in the cytoplasm. The catalysed reaction is shikimate + ATP = 3-phosphoshikimate + ADP + H(+). The protein operates within metabolic intermediate biosynthesis; chorismate biosynthesis; chorismate from D-erythrose 4-phosphate and phosphoenolpyruvate: step 5/7. Its function is as follows. Catalyzes the specific phosphorylation of the 3-hydroxyl group of shikimic acid using ATP as a cosubstrate. The protein is Shikimate kinase of Shewanella baltica (strain OS195).